Here is a 205-residue protein sequence, read N- to C-terminus: Putative 3-methyladenine DNA glycosylase (205 aa).

Belongs to the DNA glycosylase MPG family.

The polypeptide is Putative 3-methyladenine DNA glycosylase (Bacillus cereus (strain ATCC 14579 / DSM 31 / CCUG 7414 / JCM 2152 / NBRC 15305 / NCIMB 9373 / NCTC 2599 / NRRL B-3711)).